The sequence spans 428 residues: Phosphomethylpyrimidine synthase (428 aa).

Substrate contacts are provided by residues asparagine 66, methionine 95, tyrosine 124, histidine 163, 185 to 187 (SRG), 226 to 229 (DGLR), and glutamate 265. Histidine 269 contributes to the Zn(2+) binding site. Tyrosine 292 lines the substrate pocket. Zn(2+) is bound at residue histidine 333. Residues cysteine 407, cysteine 410, and cysteine 414 each coordinate [4Fe-4S] cluster.

Belongs to the ThiC family. It depends on [4Fe-4S] cluster as a cofactor.

The enzyme catalyses 5-amino-1-(5-phospho-beta-D-ribosyl)imidazole + S-adenosyl-L-methionine = 4-amino-2-methyl-5-(phosphooxymethyl)pyrimidine + CO + 5'-deoxyadenosine + formate + L-methionine + 3 H(+). It functions in the pathway cofactor biosynthesis; thiamine diphosphate biosynthesis. Catalyzes the synthesis of the hydroxymethylpyrimidine phosphate (HMP-P) moiety of thiamine from aminoimidazole ribotide (AIR) in a radical S-adenosyl-L-methionine (SAM)-dependent reaction. In Thermococcus kodakarensis (strain ATCC BAA-918 / JCM 12380 / KOD1) (Pyrococcus kodakaraensis (strain KOD1)), this protein is Phosphomethylpyrimidine synthase.